A 128-amino-acid chain; its full sequence is Fluoride-specific ion channel FluC (128 aa).

A run of 4 helical transmembrane segments spans residues 10–30 (FLAV…AGLW), 40–60 (TLLV…VLLA), 71–91 (AAVT…AETV), and 102–122 (ALGY…LGLA). Residues G78 and T81 each coordinate Na(+).

The protein belongs to the fluoride channel Fluc/FEX (TC 1.A.43) family.

The protein localises to the cell inner membrane. The catalysed reaction is fluoride(in) = fluoride(out). Na(+) is not transported, but it plays an essential structural role and its presence is essential for fluoride channel function. Fluoride-specific ion channel. Important for reducing fluoride concentration in the cell, thus reducing its toxicity. In Bordetella petrii (strain ATCC BAA-461 / DSM 12804 / CCUG 43448), this protein is Fluoride-specific ion channel FluC.